The sequence spans 324 residues: PTS system glucose-specific EIICBA component (324 aa).

Positions 1 to 63 constitute a PTS EIIC type-1 domain; that stretch reads HLLNVKIGMT…KWDLATPGRE (63 aa). The next 2 helical transmembrane spans lie at 5–25 and 28–48; these read VKIG…GVLP and TAWW…YFGF. The region spanning 78-159 is the PTS EIIB type-1 domain; it reads GDLPYEVLAA…QDIMQGKAPA (82 aa). Residue cysteine 100 is the Phosphocysteine intermediate; for EIIB activity of the active site. A disordered region spans residues 156-177; the sequence is KAPARAEEKPKTAASEAAESET. The segment covering 167–177 has biased composition (low complexity); the sequence is TAASEAAESET. Positions 194 to 298 constitute a PTS EIIA type-1 domain; the sequence is DQVFSQKMMG…SIVTPVIFTN (105 aa). Catalysis depends on histidine 246, which acts as the Tele-phosphohistidine intermediate; for EIIA activity.

It localises to the cell membrane. It catalyses the reaction N(pros)-phospho-L-histidyl-[protein] + D-glucose(out) = D-glucose 6-phosphate(in) + L-histidyl-[protein]. Functionally, the phosphoenolpyruvate-dependent sugar phosphotransferase system (sugar PTS), a major carbohydrate active transport system, catalyzes the phosphorylation of incoming sugar substrates concomitantly with their translocation across the cell membrane. This system is involved in glucose transport. This chain is PTS system glucose-specific EIICBA component (ptsG), found in Geobacillus stearothermophilus (Bacillus stearothermophilus).